A 113-amino-acid chain; its full sequence is Nucleoid-associated protein CLJ_B0037 (113 aa).

Over residues 93–102 the composition is skewed to basic and acidic residues; the sequence is EEDTSSEVKR. The tract at residues 93–113 is disordered; sequence EEDTSSEVKRLTGGMNLPGMF.

This sequence belongs to the YbaB/EbfC family. Homodimer.

The protein localises to the cytoplasm. It localises to the nucleoid. Its function is as follows. Binds to DNA and alters its conformation. May be involved in regulation of gene expression, nucleoid organization and DNA protection. In Clostridium botulinum (strain 657 / Type Ba4), this protein is Nucleoid-associated protein CLJ_B0037.